We begin with the raw amino-acid sequence, 245 residues long: uncharacterized protein (245 aa).

This is an uncharacterized protein from Mycobacterium tuberculosis (strain CDC 1551 / Oshkosh).